Reading from the N-terminus, the 223-residue chain is Cytidylate kinase (223 aa).

An ATP-binding site is contributed by 12 to 20 (GPAGSGKST).

It belongs to the cytidylate kinase family. Type 1 subfamily.

It is found in the cytoplasm. It carries out the reaction CMP + ATP = CDP + ADP. The enzyme catalyses dCMP + ATP = dCDP + ADP. In Aster yellows witches'-broom phytoplasma (strain AYWB), this protein is Cytidylate kinase.